The primary structure comprises 678 residues: Pescadillo homolog (678 aa).

Over residues 283–303 (EEEEPEEVDSEAGDEDDDDLP) the composition is skewed to acidic residues. Positions 283-316 (EEEEPEEVDSEAGDEDDDDLPVLDSGTRRRRAAA) are disordered. In terms of domain architecture, BRCT spans 361–451 (VCGSLFRGRV…VLMPTDLYAP (91 aa)). A coiled-coil region spans residues 552–587 (MTRKARKMYNNMKQKEAAKQERVQQLESKKAKLAAT). A disordered region spans residues 563-678 (MKQKEAAKQE…DAAPAKRQRR (116 aa)). A compositionally biased stretch (basic and acidic residues) spans 564-581 (KQKEAAKQERVQQLESKK). Low complexity-rich tracts occupy residues 597-618 (KPAA…VAAS) and 630-661 (APAP…AAKE). Positions 662-672 (APAKGGKDAAP) are enriched in basic and acidic residues.

This sequence belongs to the pescadillo family.

It localises to the nucleus. Its subcellular location is the nucleolus. It is found in the nucleoplasm. Functionally, required for maturation of ribosomal RNAs and formation of the large ribosomal subunit. The sequence is that of Pescadillo homolog from Chlamydomonas reinhardtii (Chlamydomonas smithii).